The sequence spans 417 residues: Pigment epithelium-derived factor (417 aa).

Positions 1-19 are cleaved as a signal peptide; that stretch reads MQALVLLLWTGALLGHGSS. The tract at residues 17 to 41 is disordered; it reads GSSQNVPSSSEGSPVPDSTGEPVEE. Positions 18 to 28 are enriched in polar residues; that stretch reads SSQNVPSSSEG. Pyrrolidone carboxylic acid is present on Gln20. Ser24 is modified (phosphoserine). Asn284 carries an N-linked (GlcNAc...) asparagine glycan.

This sequence belongs to the serpin family. In terms of assembly, interacts with PNPLA2; this interaction stimulates the phospholipase A2 activity of PNPLA2. Highly expressed in the liver, gastric glandular mucosa and renal tubules. It is also expressed in the brain, heart, lung retina and testes.

The protein resides in the secreted. It is found in the melanosome. Neurotrophic protein; induces extensive neuronal differentiation in retinoblastoma cells. Potent inhibitor of angiogenesis. As it does not undergo the S (stressed) to R (relaxed) conformational transition characteristic of active serpins, it exhibits no serine protease inhibitory activity. This is Pigment epithelium-derived factor (Serpinf1) from Mus musculus (Mouse).